Reading from the N-terminus, the 246-residue chain is Ribonuclease 3 (246 aa).

One can recognise an RNase III domain in the interval 8 to 137 (ANRLKTRLGF…LLGAIYLDQG (130 aa)). Glu50 lines the Mg(2+) pocket. The active site involves Asp54. Residues Asp123 and Glu126 each contribute to the Mg(2+) site. Residue Glu126 is part of the active site. The 70-residue stretch at 164–233 (DYKTELQEIL…AKDAFQHLEG (70 aa)) folds into the DRBM domain. A disordered region spans residues 212–246 (SGHSKKEAEQQAAKDAFQHLEGMGKSGHKSAGPIR).

The protein belongs to the ribonuclease III family. As to quaternary structure, homodimer. Mg(2+) is required as a cofactor.

Its subcellular location is the cytoplasm. The enzyme catalyses Endonucleolytic cleavage to 5'-phosphomonoester.. Functionally, digests double-stranded RNA. Involved in the processing of primary rRNA transcript to yield the immediate precursors to the large and small rRNAs (23S and 16S). Processes some mRNAs, and tRNAs when they are encoded in the rRNA operon. Processes pre-crRNA and tracrRNA of type II CRISPR loci if present in the organism. In Desulforamulus reducens (strain ATCC BAA-1160 / DSM 100696 / MI-1) (Desulfotomaculum reducens), this protein is Ribonuclease 3.